Here is a 307-residue protein sequence, read N- to C-terminus: Probable GTP 3',8-cyclase (307 aa).

Residues 5-227 enclose the Radical SAM core domain; that stretch reads AYGRRISSLR…RRTKYYLGGA (223 aa). Residue R14 coordinates GTP. 2 residues coordinate [4Fe-4S] cluster: C21 and C25. Y27 serves as a coordination point for S-adenosyl-L-methionine. Residue C28 coordinates [4Fe-4S] cluster. K61 is a binding site for GTP. Residue G65 coordinates S-adenosyl-L-methionine. Residue T89 coordinates GTP. S113 contributes to the S-adenosyl-L-methionine binding site. K151 lines the GTP pocket. C241 and C244 together coordinate [4Fe-4S] cluster. Residue 246–248 participates in GTP binding; sequence RLR. C258 serves as a coordination point for [4Fe-4S] cluster.

This sequence belongs to the radical SAM superfamily. MoaA family. It depends on [4Fe-4S] cluster as a cofactor.

It catalyses the reaction GTP + AH2 + S-adenosyl-L-methionine = (8S)-3',8-cyclo-7,8-dihydroguanosine 5'-triphosphate + 5'-deoxyadenosine + L-methionine + A + H(+). Its pathway is cofactor biosynthesis; molybdopterin biosynthesis. In terms of biological role, catalyzes the cyclization of GTP to (8S)-3',8-cyclo-7,8-dihydroguanosine 5'-triphosphate. The protein is Probable GTP 3',8-cyclase of Methanocella arvoryzae (strain DSM 22066 / NBRC 105507 / MRE50).